Consider the following 418-residue polypeptide: Isocitrate dehydrogenase [NADP] (418 aa).

T106 is an NADP(+) binding site. D-threo-isocitrate-binding residues include S115, N117, R121, R131, and R155. S115 carries the post-translational modification Phosphoserine. T193 is subject to Phosphothreonine. D309 provides a ligand contact to Mg(2+). NADP(+)-binding positions include 341–347 (HGTAPKY), N354, Y393, and R397.

It belongs to the isocitrate and isopropylmalate dehydrogenases family. In terms of assembly, homodimer. The cofactor is Mg(2+). It depends on Mn(2+) as a cofactor.

It is found in the secreted. It catalyses the reaction D-threo-isocitrate + NADP(+) = 2-oxoglutarate + CO2 + NADPH. In terms of biological role, catalyzes the oxidative decarboxylation of isocitrate to 2-oxoglutarate and carbon dioxide with the concomitant reduction of NADP(+). This chain is Isocitrate dehydrogenase [NADP] (icd), found in Pseudomonas aeruginosa (strain UCBPP-PA14).